Reading from the N-terminus, the 328-residue chain is GMP reductase (328 aa).

Cys176 functions as the Thioimidate intermediate in the catalytic mechanism. Position 205–228 (205–228) interacts with NADP(+); the sequence is IIADGGIRTHGDIAKSIRFGASMI.

The protein belongs to the IMPDH/GMPR family. GuaC type 2 subfamily.

The catalysed reaction is IMP + NH4(+) + NADP(+) = GMP + NADPH + 2 H(+). Catalyzes the irreversible NADPH-dependent deamination of GMP to IMP. It functions in the conversion of nucleobase, nucleoside and nucleotide derivatives of G to A nucleotides, and in maintaining the intracellular balance of A and G nucleotides. The sequence is that of GMP reductase from Streptococcus pneumoniae (strain CGSP14).